Reading from the N-terminus, the 579-residue chain is Aspartate--tRNA(Asp/Asn) ligase (579 aa).

Glu169 serves as a coordination point for L-aspartate. Residues 193 to 196 (QLFK) are aspartate. Arg215 contacts L-aspartate. ATP is bound by residues 215 to 217 (RDE) and Gln224. Residue His437 participates in L-aspartate binding. Glu471 is a binding site for ATP. Arg478 provides a ligand contact to L-aspartate. 523–526 (GWDR) lines the ATP pocket. A disordered region spans residues 551–579 (DPLTGAPTPITAEQRREAGVDAVPEQATS).

Belongs to the class-II aminoacyl-tRNA synthetase family. Type 1 subfamily. Homodimer.

It localises to the cytoplasm. It carries out the reaction tRNA(Asx) + L-aspartate + ATP = L-aspartyl-tRNA(Asx) + AMP + diphosphate. Aspartyl-tRNA synthetase with relaxed tRNA specificity since it is able to aspartylate not only its cognate tRNA(Asp) but also tRNA(Asn). Reaction proceeds in two steps: L-aspartate is first activated by ATP to form Asp-AMP and then transferred to the acceptor end of tRNA(Asp/Asn). This is Aspartate--tRNA(Asp/Asn) ligase from Thermobifida fusca (strain YX).